The chain runs to 685 residues: DNA ligase (685 aa).

NAD(+) is bound by residues 47-51 (DSEYD), 96-97 (SL), and E125. K127 serves as the catalytic N6-AMP-lysine intermediate. 4 residues coordinate NAD(+): R148, E185, K304, and K328. Zn(2+)-binding residues include C422, C425, C440, and C446. Residues 605–685 (ADAQPLKGQT…ELLALLAANA (81 aa)) enclose the BRCT domain.

Belongs to the NAD-dependent DNA ligase family. LigA subfamily. Mg(2+) is required as a cofactor. The cofactor is Mn(2+).

The enzyme catalyses NAD(+) + (deoxyribonucleotide)n-3'-hydroxyl + 5'-phospho-(deoxyribonucleotide)m = (deoxyribonucleotide)n+m + AMP + beta-nicotinamide D-nucleotide.. Functionally, DNA ligase that catalyzes the formation of phosphodiester linkages between 5'-phosphoryl and 3'-hydroxyl groups in double-stranded DNA using NAD as a coenzyme and as the energy source for the reaction. It is essential for DNA replication and repair of damaged DNA. This chain is DNA ligase, found in Shewanella baltica (strain OS195).